Reading from the N-terminus, the 266-residue chain is UPF0294 protein YafD (266 aa).

Belongs to the UPF0294 family.

It localises to the cytoplasm. This chain is UPF0294 protein YafD, found in Salmonella dublin (strain CT_02021853).